An 80-amino-acid polypeptide reads, in one-letter code: MKEHDLINMEGIVTESLPNAMFRVFLDNGCHVLTHISGKIRRNYIRILPGDRVKVELSIYDLTKGRILYRIRNEASKDTL.

In terms of domain architecture, S1-like spans 1-72 (MKEHDLINME…TKGRILYRIR (72 aa)).

It belongs to the IF-1 family. As to quaternary structure, component of the 30S ribosomal translation pre-initiation complex which assembles on the 30S ribosome in the order IF-2 and IF-3, IF-1 and N-formylmethionyl-tRNA(fMet); mRNA recruitment can occur at any time during PIC assembly.

Its subcellular location is the plastid. It is found in the chloroplast. One of the essential components for the initiation of protein synthesis. Stabilizes the binding of IF-2 and IF-3 on the 30S subunit to which N-formylmethionyl-tRNA(fMet) subsequently binds. Helps modulate mRNA selection, yielding the 30S pre-initiation complex (PIC). Upon addition of the 50S ribosomal subunit IF-1, IF-2 and IF-3 are released leaving the mature 70S translation initiation complex. The sequence is that of Translation initiation factor IF-1, chloroplastic from Psilotum nudum (Whisk fern).